The primary structure comprises 874 residues: Pentatricopeptide repeat-containing protein At2g17140 (874 aa).

PPR repeat units lie at residues 111–145, 146–180, 181–215, 216–250, 251–285, 290–320, 325–359, 360–394, 395–429, 430–464, 465–499, 523–557, 558–592, 593–627, 628–662, 663–693, 697–731, 732–766, and 767–797; these read SVYLYNLLLESCIKERRVEFVSWLYKDMVLCGIAP, QTYTFNLLIRALCDSSCVDAARELFDEMPEKGCKP, NEFTFGILVRGYCKAGLTDKGLELLNAMESFGVLP, NKVIYNTIVSSFCREGRNDDSEKMVEKMREEGLVP, DIVTFNSRISALCKEGKVLDASRIFSDMELDEYLG, NSITYNLMLKGFCKVGLLEDAKTLFESIREN, SLQSYNIWLQGLVRHGKFIEAETVLKQMTDKGIGP, SIYSYNILMDGLCKLGMLSDAKTIVGLMKRNGVCP, DAVTYGCLLHGYCSVGKVDAAKSLLQEMMRNNCLP, NAYTCNILLHSLWKMGRISEAEELLRKMNEKGYGL, DTVTCNIIVDGLCGSGELDKAIEIVKGMRVHGSAA, DLITYSTLLNGLCKAGRFAEAKNLFAEMMGEKLQP, DSVAYNIFIHHFCKQGKISSAFRVLKDMEKKGCHK, SLETYNSLILGLGIKNQIFEIHGLMDEMKEKGISP, NICTYNTAIQYLCEGEKVEDATNLLDEMMQKNIAP, NVFSFKYLIEAFCKVPDFDMAQEVFETAVSI, KEGLYSLMFNELLAAGQLLKATELLEAVLDRGFEL, GTFLYKDLVESLCKKDELEVASGILHKMIDRGYGF, and DPAALMPVIDGLGKMGNKKEANSFADKMMEM.

This sequence belongs to the PPR family. P subfamily.

The chain is Pentatricopeptide repeat-containing protein At2g17140 from Arabidopsis thaliana (Mouse-ear cress).